The sequence spans 272 residues: Ethanolamine ammonia-lyase small subunit (272 aa).

Adenosylcob(III)alamin is bound by residues valine 161, glutamate 182, and cysteine 211.

The protein belongs to the EutC family. The basic unit is a heterodimer which dimerizes to form tetramers. The heterotetramers trimerize; 6 large subunits form a core ring with 6 small subunits projecting outwards. Adenosylcob(III)alamin is required as a cofactor.

Its subcellular location is the bacterial microcompartment. The catalysed reaction is ethanolamine = acetaldehyde + NH4(+). It functions in the pathway amine and polyamine degradation; ethanolamine degradation. Functionally, catalyzes the deamination of various vicinal amino-alcohols to oxo compounds. Allows this organism to utilize ethanolamine as the sole source of nitrogen and carbon in the presence of external vitamin B12. This chain is Ethanolamine ammonia-lyase small subunit, found in Pseudomonas putida (strain GB-1).